The sequence spans 185 residues: MAETAYVPRLRAEYDNSIRTQLTEKFGYGNVMQVPRLDKVVLNMGVGEAVNDRKKAEQAAADMALIAGQKAVVTYSRVAISTFKLRENQPIGCKVTLRKAKMYEFIDRLITVALPRVRDFRGLNPKSFDGRGNYSLGIKEHIIFPEIDFDKTGESWGMDITVCTTAGTDDEARALLTAFNFPFRQ.

It belongs to the universal ribosomal protein uL5 family. Part of the 50S ribosomal subunit; part of the 5S rRNA/L5/L18/L25 subcomplex. Contacts the 5S rRNA and the P site tRNA. Forms a bridge to the 30S subunit in the 70S ribosome.

Functionally, this is one of the proteins that bind and probably mediate the attachment of the 5S RNA into the large ribosomal subunit, where it forms part of the central protuberance. In the 70S ribosome it contacts protein S13 of the 30S subunit (bridge B1b), connecting the 2 subunits; this bridge is implicated in subunit movement. Contacts the P site tRNA; the 5S rRNA and some of its associated proteins might help stabilize positioning of ribosome-bound tRNAs. This Rhodopseudomonas palustris (strain HaA2) protein is Large ribosomal subunit protein uL5.